Here is a 113-residue protein sequence, read N- to C-terminus: MHEMSLAEGVLQLIEDAARKDHFAKVTTVWLEIGQLSGVEPEAMVFCFDAVTRDSVAQGARLEIMTLPGTAWCMACAETVPMAEVFGQCPQCGGYQLQVTGGTEMRVKELEVE.

Position 2 (H2) interacts with Ni(2+). The Zn(2+) site is built by C73, C76, C89, and C92.

The protein belongs to the HypA/HybF family.

Functionally, involved in the maturation of [NiFe] hydrogenases. Required for nickel insertion into the metal center of the hydrogenase. This is Hydrogenase maturation factor HypA from Albidiferax ferrireducens (strain ATCC BAA-621 / DSM 15236 / T118) (Rhodoferax ferrireducens).